Reading from the N-terminus, the 245-residue chain is MSQVNMRDMLKAGVHFGHQTRYWNPKMGKYIFGARNKIHIINLEKTLPMFNEALTFVERLAQGKNKILFVGTKRSAGKIVAEEAARCGSPYVDHRWLGGMLTNFKTIRASIKRLRDLEVQAEDGTFAKLTKKEALMRSRDLEKLDRSLGGIKDMGGLPDALFVIDVDHERIAITEANKLGIPVIGVVDTNSSPEGVDYIIPGNDDAIRAIQLYMGSMADAVIRGRNHVAGGTEQFVEEAPVAAAE.

The protein belongs to the universal ribosomal protein uS2 family.

The sequence is that of Small ribosomal subunit protein uS2 from Pseudomonas fluorescens (strain SBW25).